Here is a 162-residue protein sequence, read N- to C-terminus: Transcriptional repressor NrdR (162 aa).

Positions Met1–Asp21 are disordered. A zinc finger spans residues Cys3–Cys34. Positions Leu49–Glu139 constitute an ATP-cone domain.

It belongs to the NrdR family. Requires Zn(2+) as cofactor.

Functionally, negatively regulates transcription of bacterial ribonucleotide reductase nrd genes and operons by binding to NrdR-boxes. This Natronomonas pharaonis (strain ATCC 35678 / DSM 2160 / CIP 103997 / JCM 8858 / NBRC 14720 / NCIMB 2260 / Gabara) (Halobacterium pharaonis) protein is Transcriptional repressor NrdR.